Consider the following 449-residue polypeptide: MTHIRFDYSKALAFFGEHELTYLRDAVKVAHHSLHEKTGVGNDFLGWLDWPVNYDKEEFARIKQAAKKIQSDSDVLLVIGIGGSYLGARAAIEMLHHSFYNALPKEKRSTPQIIFVGNNISSTYMKDVIDFLEGKDFSINVISKSGTTTEPAIAFRIFRKLLEDKYGKEEARRRIYATTDRARGALRTLADEEGYETFVIPDDIGGRYSVLTAVGLLPIAASGADIDAMMEGAAKAREDFSRSELEENAAYQYAAIRNILYNKGKTIELLVNYEPALHYFAEWWKQLFGESEGKDQKGIYPASADFSTDLHSLGQYIQEGRRDLFETVLKLEEPRHELVIEAEESDLDGLNYLAGQTVDFVNTKAFEGTLLAHTDGGVPNLVVTLPKLDEYTFGYLVYFFEKACAMSGYLLGVNPFDQPGVEAYKKNMFALLGKPGYEELKDELEKRLK.

Phosphothreonine is present on threonine 38. Glutamate 290 serves as the catalytic Proton donor. Catalysis depends on residues histidine 311 and lysine 425.

The protein belongs to the GPI family.

It is found in the cytoplasm. It carries out the reaction alpha-D-glucose 6-phosphate = beta-D-fructose 6-phosphate. It functions in the pathway carbohydrate biosynthesis; gluconeogenesis. The protein operates within carbohydrate degradation; glycolysis; D-glyceraldehyde 3-phosphate and glycerone phosphate from D-glucose: step 2/4. Its function is as follows. Catalyzes the reversible isomerization of glucose-6-phosphate to fructose-6-phosphate. This Geobacillus thermodenitrificans (strain NG80-2) protein is Glucose-6-phosphate isomerase.